A 505-amino-acid chain; its full sequence is Glutamate--tRNA ligase (505 aa).

Positions Pro12–Gly22 match the 'HIGH' region motif. A 'KMSKS' region motif is present at residues Lys260 to Arg264. Residue Lys263 coordinates ATP.

The protein belongs to the class-I aminoacyl-tRNA synthetase family. Glutamate--tRNA ligase type 1 subfamily. As to quaternary structure, monomer.

The protein resides in the cytoplasm. It catalyses the reaction tRNA(Glu) + L-glutamate + ATP = L-glutamyl-tRNA(Glu) + AMP + diphosphate. In terms of biological role, catalyzes the attachment of glutamate to tRNA(Glu) in a two-step reaction: glutamate is first activated by ATP to form Glu-AMP and then transferred to the acceptor end of tRNA(Glu). The chain is Glutamate--tRNA ligase from Parabacteroides distasonis (strain ATCC 8503 / DSM 20701 / CIP 104284 / JCM 5825 / NCTC 11152).